Consider the following 145-residue polypeptide: D-aminoacyl-tRNA deacylase (145 aa).

Residues 137 to 138 (GP) carry the Gly-cisPro motif, important for rejection of L-amino acids motif.

The protein belongs to the DTD family. Homodimer.

The protein resides in the cytoplasm. It carries out the reaction glycyl-tRNA(Ala) + H2O = tRNA(Ala) + glycine + H(+). The enzyme catalyses a D-aminoacyl-tRNA + H2O = a tRNA + a D-alpha-amino acid + H(+). Its function is as follows. An aminoacyl-tRNA editing enzyme that deacylates mischarged D-aminoacyl-tRNAs. Also deacylates mischarged glycyl-tRNA(Ala), protecting cells against glycine mischarging by AlaRS. Acts via tRNA-based rather than protein-based catalysis; rejects L-amino acids rather than detecting D-amino acids in the active site. By recycling D-aminoacyl-tRNA to D-amino acids and free tRNA molecules, this enzyme counteracts the toxicity associated with the formation of D-aminoacyl-tRNA entities in vivo and helps enforce protein L-homochirality. The polypeptide is D-aminoacyl-tRNA deacylase (Rhodococcus jostii (strain RHA1)).